A 315-amino-acid chain; its full sequence is Olfactory receptor 5M1 (315 aa).

Residues Met-1–Lys-25 lie on the Extracellular side of the membrane. Residue Asn-5 is glycosylated (N-linked (GlcNAc...) asparagine). The chain crosses the membrane as a helical span at residues Ile-26–Ile-46. Residues Leu-47 to His-54 are Cytoplasmic-facing. The helical transmembrane segment at Leu-55 to Ser-75 threads the bilayer. Topologically, residues Asn-76 to Thr-99 are extracellular. Cys-97 and Cys-189 are oxidised to a cystine. A helical membrane pass occupies residues Gln-100–Leu-120. At Asp-121 to Asn-139 the chain is on the cytoplasmic side. The helical transmembrane segment at Ile-140 to Ser-160 threads the bilayer. At Leu-161 to Lys-196 the chain is on the extracellular side. Residues Met-197–Ser-217 traverse the membrane as a helical segment. The Cytoplasmic segment spans residues Tyr-218 to Ala-237. The helical transmembrane segment at Phe-238–Met-258 threads the bilayer. Residues Tyr-259 to Ser-271 lie on the Extracellular side of the membrane. Residues Lys-272–Leu-292 traverse the membrane as a helical segment. Over Arg-293–Val-315 the chain is Cytoplasmic.

It belongs to the G-protein coupled receptor 1 family.

The protein localises to the cell membrane. In terms of biological role, odorant receptor. This Homo sapiens (Human) protein is Olfactory receptor 5M1 (OR5M1).